The chain runs to 310 residues: D-alanine--D-alanine ligase (310 aa).

The region spanning 107 to 302 is the ATP-grasp domain; the sequence is KQAFQAARLT…FEDLVERILA (196 aa). 135 to 188 provides a ligand contact to ATP; that stretch reads EFSLPVVVKPSQEGSSVGVSIVKKESEFAAAMKEAFRYDREILVEQFIKGSEVQ. 3 residues coordinate Mg(2+): Asp-256, Glu-269, and Asn-271.

The protein belongs to the D-alanine--D-alanine ligase family. It depends on Mg(2+) as a cofactor. Mn(2+) is required as a cofactor.

It is found in the cytoplasm. The enzyme catalyses 2 D-alanine + ATP = D-alanyl-D-alanine + ADP + phosphate + H(+). The protein operates within cell wall biogenesis; peptidoglycan biosynthesis. Functionally, cell wall formation. The protein is D-alanine--D-alanine ligase of Geotalea uraniireducens (strain Rf4) (Geobacter uraniireducens).